A 783-amino-acid chain; its full sequence is MKAGIPLSRCTQRIPLLVARQVSRNITTTTTKFSLAPEYNHIRKVFDSQKYFNHFTKQGSHATLFSSPQTGLFHNEYLTTPQGLVDFSQQSLSQAKQLVSEMLSQVNTVDGKLKFIKKLDQLSDILCRVIDVAEFIRVVHPSVKWINAAQQTHEMMFEFMNQLNTNVELYSSLRDILNNPLITEQLTPEEIKVGEYLRQDFERSGIHMDPQTRENFVTITQEISLLGSQFGNQINGLKSYWCPVTVAEWESIEDPQLKKEIKNYQSKYDGIRQSETIQIPLVANIPYTILTNCSSDTLRKKVWVALHNSPDEQIETLNRFISYRALLSKMLNYKSFADYQLEHKMAKTPENVITFLFNLQKSLIKKGVVEELSQLSEIKHNGSGSASVNDIVNDIKPWDRDYLLARLQQRMQSEVSAGNVKEYFSVGTVIAGLNELFTRLYDISFVPMAALKGETWDSHQVRKIKVVDNAANKTLGFLYLDFWSTKVLPSHFTIVCSRRLNTSIGSETIEGMEKLVQLDEDYQLPVVSLVCNFASSGNFSFGRFAGVENEKPTLLTLDQVDTIFHEMGHAMHSMIGRTELHNLSGTRCSTDFVELPSVLMESFSKDPRVICQIGRHFDTDEKLPESLLGQAHEHRIMLDACETFMQSKMAMLDQKLHNEEMVNLLAKGLYEVDSTKVYHSVEKELKVFADEWSTWHGKFPHLFSYGAVYYSYLLDRAIADKIWQGLFAKDPWNGEAGKKYKESVLKWGGTRDPWECLADALGNDELKQGDSRAMEIIGQNSNL.

The N-terminal 33 residues, 1–33 (MKAGIPLSRCTQRIPLLVARQVSRNITTTTTKF), are a transit peptide targeting the mitochondrion. Zn(2+) is bound at residue histidine 565. The active site involves glutamate 566. Residues histidine 569 and histidine 572 each coordinate Zn(2+).

This sequence belongs to the peptidase M3 family. Requires Zn(2+) as cofactor.

It is found in the mitochondrion matrix. It catalyses the reaction Release of an N-terminal octapeptide as second stage of processing of some proteins imported into the mitochondrion.. Its function is as follows. Cleaves proteins, imported into the mitochondrion, to their mature size. While most mitochondrial precursor proteins are processed to the mature form in one step by mitochondrial processing peptidase (MPP), the sequential cleavage by MIP of an octapeptide after initial processing by MPP is a required step for a subgroup of nuclear-encoded precursor proteins destined for the matrix or the inner membrane. The polypeptide is Mitochondrial intermediate peptidase (OCT1) (Candida albicans (strain SC5314 / ATCC MYA-2876) (Yeast)).